A 134-amino-acid chain; its full sequence is Profilin (134 aa).

This sequence belongs to the profilin family. As to quaternary structure, occurs in many kinds of cells as a complex with monomeric actin in a 1:1 ratio.

It is found in the cytoplasm. The protein resides in the cytoskeleton. Its function is as follows. Binds to actin and affects the structure of the cytoskeleton. At high concentrations, profilin prevents the polymerization of actin, whereas it enhances it at low concentrations. By binding to PIP2, it inhibits the formation of IP3 and DG. This Brassica napus (Rape) protein is Profilin.